The primary structure comprises 521 residues: Glutamate--tRNA ligase (521 aa).

Residues Pro-13–Gly-23 carry the 'HIGH' region motif. A 'KMSKS' region motif is present at residues Lys-253–Arg-257. Lys-256 lines the ATP pocket.

This sequence belongs to the class-I aminoacyl-tRNA synthetase family. Glutamate--tRNA ligase type 1 subfamily. Monomer.

The protein resides in the cytoplasm. The enzyme catalyses tRNA(Glu) + L-glutamate + ATP = L-glutamyl-tRNA(Glu) + AMP + diphosphate. Its function is as follows. Catalyzes the attachment of glutamate to tRNA(Glu) in a two-step reaction: glutamate is first activated by ATP to form Glu-AMP and then transferred to the acceptor end of tRNA(Glu). This is Glutamate--tRNA ligase from Leptospira interrogans serogroup Icterohaemorrhagiae serovar copenhageni (strain Fiocruz L1-130).